A 204-amino-acid polypeptide reads, in one-letter code: Glycerol-3-phosphate acyltransferase (204 aa).

Helical transmembrane passes span 8–28, 53–73, 81–101, 116–136, and 155–175; these read ILIF…CYIF, VPAA…VVIA, FITA…IFFG, FGFS…VAII, and VIFT…IIIL.

The protein belongs to the PlsY family. In terms of assembly, probably interacts with PlsX.

Its subcellular location is the cell inner membrane. It carries out the reaction an acyl phosphate + sn-glycerol 3-phosphate = a 1-acyl-sn-glycero-3-phosphate + phosphate. It functions in the pathway lipid metabolism; phospholipid metabolism. In terms of biological role, catalyzes the transfer of an acyl group from acyl-phosphate (acyl-PO(4)) to glycerol-3-phosphate (G3P) to form lysophosphatidic acid (LPA). This enzyme utilizes acyl-phosphate as fatty acyl donor, but not acyl-CoA or acyl-ACP. The sequence is that of Glycerol-3-phosphate acyltransferase from Francisella tularensis subsp. mediasiatica (strain FSC147).